Consider the following 59-residue polypeptide: Conotoxin Cl14.4 (59 aa).

Positions 1 to 19 are cleaved as a signal peptide; it reads MKFLLFLSVALLLTSFIET. Positions 20–36 are excised as a propeptide; the sequence is VTVNKAGMERPSRALVG. Ile-58 carries the post-translational modification Isoleucine amide.

Contains 2 disulfide bonds. In terms of tissue distribution, expressed by the venom duct.

It is found in the secreted. The sequence is that of Conotoxin Cl14.4 from Californiconus californicus (California cone).